Here is a 521-residue protein sequence, read N- to C-terminus: GMC-type oxidoreductase acuG (521 aa).

Residues 14-15 (TV), 34-35 (EA), leucine 82, 90-93 (NYGL), alanine 492, and 503-504 (YQ) each bind FAD.

This sequence belongs to the GMC oxidoreductase family. Requires FAD as cofactor.

It participates in secondary metabolite biosynthesis. Its function is as follows. GMC-type oxidoreductase; part of the gene cluster that mediates the biosynthesis of aculins. The pathway begins with the synthesis of 6-methylsalicylic acid by the polyketide synthase (PKS) acuA via condensation of acetate and malonate units. The 6-methylsalicylic acid decarboxylase acuB then catalyzes the decarboxylation of 6-methylsalicylic acid to yield m-cresol (also known as 3-methylphenol). These first reactions occur in the cytosol. The intermediate m-cresol is then transported into the endoplasmic reticulum where the cytochrome P450 monooxygenase acuC converts it to m-hydroxybenzyl alcohol, which is further converted to gentisyl alcohol by the cytochrome P450 monooxygenase acuD. Gentisyl alcohol is further oxidized by the oxidoreductase acuE that probably catalyzes hydroxylation of the aromatic ring. The aromatic system might then be opened by oxidation through a Baeyer-Villiger type of oxidation, which could be catalyzed by acuF, with the carboxylic acid at C-1 subsequently reduced to an aldehyde by acuG. Subsequently, a hemiacetal is formed, before the dehydrogenase acuH would reduce the double bond between C-4 and C-6. Finally, keto-enol tautomerism results in formation of aculinic acid, which exists as two diastereomers (both R/S configurations at C-1) by non-enzymatic hemiacetal formation. The carboxypeptidase acuI could be involved in the linking of aculinic acid to an aculene A moiety produced by the aculene biosynthesis cluster and which leads to the production of aculin A. AcuI may also be involved in the attachment of proline to aculinic acid to form epi-aculins A and B. The protein is GMC-type oxidoreductase acuG of Aspergillus aculeatus (strain ATCC 16872 / CBS 172.66 / WB 5094).